Reading from the N-terminus, the 265-residue chain is Mlc titration factor A (265 aa).

Zn(2+) contacts are provided by H111, H148, H152, and E211.

The protein belongs to the MtfA family. As to quaternary structure, interacts with Mlc. Zn(2+) is required as a cofactor.

It is found in the cytoplasm. In terms of biological role, involved in the modulation of the activity of the glucose-phosphotransferase system (glucose-PTS). Interacts with the transcriptional repressor Mlc, preventing its interaction with DNA and leading to the modulation of expression of genes regulated by Mlc, including ptsG, which encodes the PTS system glucose-specific EIICB component. Its function is as follows. Shows zinc-dependent metallopeptidase activity. This chain is Mlc titration factor A, found in Escherichia coli O8 (strain IAI1).